A 101-amino-acid polypeptide reads, in one-letter code: MLLMNLQLFATKKGVGSSKNGRDSEAKRLGVKCADGQFVLAGSILVRQRGTKIHPGQNVGRGGDDTLFSKVDGVVRYERVGKNKKRASVYPIDVEEVIAAE.

A propeptide spanning residues 1–9 (MLLMNLQLF) is cleaved from the precursor.

The protein belongs to the bacterial ribosomal protein bL27 family. In terms of processing, the N-terminus is cleaved by ribosomal processing cysteine protease Prp.

This Clostridium tetani (strain Massachusetts / E88) protein is Large ribosomal subunit protein bL27.